The sequence spans 223 residues: Ribose-5-phosphate isomerase A (223 aa).

Substrate contacts are provided by residues 26–29 (TGST), 82–85 (DGAD), and 95–98 (KGGG). The active-site Proton acceptor is E104. K122 contacts substrate.

Belongs to the ribose 5-phosphate isomerase family. Homodimer.

The enzyme catalyses aldehydo-D-ribose 5-phosphate = D-ribulose 5-phosphate. Its pathway is carbohydrate degradation; pentose phosphate pathway; D-ribose 5-phosphate from D-ribulose 5-phosphate (non-oxidative stage): step 1/1. Catalyzes the reversible conversion of ribose-5-phosphate to ribulose 5-phosphate. The protein is Ribose-5-phosphate isomerase A of Streptococcus agalactiae serotype Ia (strain ATCC 27591 / A909 / CDC SS700).